Reading from the N-terminus, the 603-residue chain is DNA ligase (603 aa).

E262 is a binding site for ATP. K264 acts as the N6-AMP-lysine intermediate in catalysis. R269, R285, E315, F355, R432, and K438 together coordinate ATP.

Belongs to the ATP-dependent DNA ligase family. Mg(2+) is required as a cofactor.

The enzyme catalyses ATP + (deoxyribonucleotide)n-3'-hydroxyl + 5'-phospho-(deoxyribonucleotide)m = (deoxyribonucleotide)n+m + AMP + diphosphate.. Its function is as follows. DNA ligase that seals nicks in double-stranded DNA during DNA replication, DNA recombination and DNA repair. This is DNA ligase from Caldivirga maquilingensis (strain ATCC 700844 / DSM 13496 / JCM 10307 / IC-167).